Consider the following 186-residue polypeptide: Dehydrin Rab18 (186 aa).

Residues 1 to 186 (MASYQNRPGG…IKEKLPGGGR (186 aa)) form a disordered region. A compositionally biased stretch (gly residues) spans 30–85 (PMGGGGYGTGGGGGATGGQGYGTGGQGYGSGGQGYGTGGQGYGTGTGTEGFGTGGG). Basic and acidic residues predominate over residues 89 to 98 (HGQEQLHKES). Residues 105 to 116 (MLHRSGSGSSSS) show a composition bias toward low complexity. Basic and acidic residues predominate over residues 133-144 (KIKEKLPGHHDQ). The segment covering 152-164 (GGMGSGYDAGGYG) has biased composition (gly residues). Residues 165–186 (GEHHEKKGMMDKIKEKLPGGGR) show a composition bias toward basic and acidic residues.

The protein belongs to the plant dehydrin family.

In Arabidopsis thaliana (Mouse-ear cress), this protein is Dehydrin Rab18 (RAB18).